We begin with the raw amino-acid sequence, 873 residues long: Aminopeptidase M1-D (873 aa).

The segment at 96–203 (LGEGVLAMRF…MSTYLVAIVV (108 aa)) is required for membrane association. Substrate-binding positions include E136 and 269–273 (GAMEN). H305 is a Zn(2+) binding site. Residue E306 is the Proton acceptor of the active site. Zn(2+) is bound by residues H309 and E328. A Dileucine internalization motif motif is present at residues 721–722 (LL).

Belongs to the peptidase M1 family. Homodimer. It depends on Zn(2+) as a cofactor.

Its subcellular location is the membrane. The protein resides in the microsome membrane. It is found in the cytoplasm. It catalyses the reaction Release of an N-terminal amino acid, Xaa-|-Yaa- from a peptide, amide or arylamide. Xaa is preferably Ala, but may be most amino acids including Pro (slow action). When a terminal hydrophobic residue is followed by a prolyl residue, the two may be released as an intact Xaa-Pro dipeptide.. The sequence is that of Aminopeptidase M1-D from Oryza sativa subsp. japonica (Rice).